A 638-amino-acid chain; its full sequence is MAKTNLSVDAADLTSRITRTPFPGSRKIYIEGSRPDIRVPFREVTLTDTLVAEGSETRREANPPLRLFDSSGVYTDPAASIDITRGLSPLRGAWINERQDTEALPGISSAYGRERLNDPALSALRMAHAPVPRRAKAGANVSQMHYARQGIITPEMEYIAIRENLVRAQLAERLATERVPKTGHSFGASIPKDITAEFVRDEVARGRAVIPNNINHPETEPMIIGRNFLIKVNANIGNSAVTSSIEEEVDKLAWSIRWGADTVMDLSTGENIHETREWILRNSPVPIGTVPIYQALEKVNGKAEDLTWEIFRDTLIEQAEQGVDYFTIHAGVRLAYVPLTANRLTGIVSRGGSIMAKWCLSHHKESFLYEHFEEICEIMKAYDVCFSLGDGLRPGSIADANDEAQFAELHTLGELTQIAWKHDVQVMIEGPGHVPLQLVKENVEKQLEACFEAPFYTLGPLITDISPGYDHISSAMGAANIGWYGTAMLCYVTPKEHLGLPNRDDVKQGLIAYKIAAHAGDLAKGYPGAQMWDNAVSKARFEFRWEDQFRLAIDPDTAMAYHDETLPKENAKVAHFCSMCGPKFCSMKISQEVREFARLNPSTTTLAKAPGVIPIQQVSSGFEEKAEEFRKGGNEIYS.

Residues N235, M264, Y293, H329, 349-351 (SRG), 390-393 (DGLR), and E429 each bind substrate. H433 is a binding site for Zn(2+). Residue Y456 participates in substrate binding. H497 lines the Zn(2+) pocket. [4Fe-4S] cluster-binding residues include C577, C580, and C585.

It belongs to the ThiC family. Homodimer. [4Fe-4S] cluster serves as cofactor.

It carries out the reaction 5-amino-1-(5-phospho-beta-D-ribosyl)imidazole + S-adenosyl-L-methionine = 4-amino-2-methyl-5-(phosphooxymethyl)pyrimidine + CO + 5'-deoxyadenosine + formate + L-methionine + 3 H(+). Its pathway is cofactor biosynthesis; thiamine diphosphate biosynthesis. Catalyzes the synthesis of the hydroxymethylpyrimidine phosphate (HMP-P) moiety of thiamine from aminoimidazole ribotide (AIR) in a radical S-adenosyl-L-methionine (SAM)-dependent reaction. This is Phosphomethylpyrimidine synthase from Polaromonas naphthalenivorans (strain CJ2).